We begin with the raw amino-acid sequence, 265 residues long: Glutamate racemase (265 aa).

Substrate contacts are provided by residues 12 to 13 and 44 to 45; these read DS and YG. Residue Cys75 is the Proton donor/acceptor of the active site. 76 to 77 is a binding site for substrate; sequence NT. Residue Cys186 is the Proton donor/acceptor of the active site. A substrate-binding site is contributed by 187 to 188; it reads TH.

The protein belongs to the aspartate/glutamate racemases family.

It carries out the reaction L-glutamate = D-glutamate. The protein operates within cell wall biogenesis; peptidoglycan biosynthesis. In terms of biological role, provides the (R)-glutamate required for cell wall biosynthesis. The polypeptide is Glutamate racemase (Pseudomonas entomophila (strain L48)).